The sequence spans 536 residues: Butyrophilin-like protein 9 (536 aa).

The signal sequence occupies residues 1 to 35 (MADFSVFLGFLKQIPRCLSIFFTYLLFLQLWEVNS). 2 Ig-like V-type domains span residues 36–149 (DKVW…WELE) and 152–241 (GSGS…KEFV). Over 36 to 257 (DKVWVLGPEE…FLPRMSPWKK (222 aa)) the chain is Extracellular. The cysteines at positions 59 and 133 are disulfide-linked. 3 N-linked (GlcNAc...) asparagine glycosylation sites follow: Asn-102, Asn-139, and Asn-224. The cysteines at positions 173 and 227 are disulfide-linked. The helical transmembrane segment at 258–278 (AFVGTLVVLPLSLIVLTMLAL) threads the bilayer. The Cytoplasmic segment spans residues 279–536 (RYFYKLRSFQ…PAWAVNEAVS (258 aa)). The B30.2/SPRY domain occupies 307–506 (DWRRSEGQAE…MTICSLPVRG (200 aa)).

The protein belongs to the immunoglobulin superfamily. BTN/MOG family.

It is found in the membrane. The polypeptide is Butyrophilin-like protein 9 (Btnl9) (Mus musculus (Mouse)).